A 346-amino-acid chain; its full sequence is Galactitol 1-phosphate 5-dehydrogenase (346 aa).

Residues C38, H59, C89, C92, C95, C103, and E144 each contribute to the Zn(2+) site.

Belongs to the zinc-containing alcohol dehydrogenase family. The cofactor is Zn(2+).

It catalyses the reaction galactitol 1-phosphate + NAD(+) = keto-D-tagatose 6-phosphate + NADH + H(+). In terms of biological role, converts galactitol 1-phosphate to tagatose 6-phosphate. The chain is Galactitol 1-phosphate 5-dehydrogenase (gatD) from Escherichia coli O157:H7.